The sequence spans 842 residues: Leucine--tRNA ligase (842 aa).

The short motif at 44 to 55 is the 'HIGH' region element; it reads PYPSANGLHVGH. The 'KMSKS' region signature appears at 619 to 623; sequence KMSKS. Lysine 622 is a binding site for ATP.

Belongs to the class-I aminoacyl-tRNA synthetase family.

It localises to the cytoplasm. The enzyme catalyses tRNA(Leu) + L-leucine + ATP = L-leucyl-tRNA(Leu) + AMP + diphosphate. This is Leucine--tRNA ligase from Borrelia duttonii (strain Ly).